The following is a 452-amino-acid chain: Cytochrome b-c1 complex subunit 2, mitochondrial (452 aa).

A mitochondrion-targeting transit peptide spans 1 to 14 (MKLLSRAGSFSRFY). Residues K65, K198, and K249 each carry the N6-acetyllysine modification. At S367 the chain carries Phosphoserine.

The protein belongs to the peptidase M16 family. UQCRC2/QCR2 subfamily. In terms of assembly, component of the ubiquinol-cytochrome c oxidoreductase (cytochrome b-c1 complex, complex III, CIII), a multisubunit enzyme composed of 11 subunits. The complex is composed of 3 respiratory subunits cytochrome b, cytochrome c1 and Rieske protein UQCRFS1, 2 core protein subunits UQCRC1/QCR1 and UQCRC2/QCR2, and 6 low-molecular weight protein subunits UQCRH/QCR6, UQCRB/QCR7, UQCRQ/QCR8, UQCR10/QCR9, UQCR11/QCR10 and subunit 9, the cleavage product of Rieske protein UQCRFS1. The complex exists as an obligatory dimer and forms supercomplexes (SCs) in the inner mitochondrial membrane with NADH-ubiquinone oxidoreductase (complex I, CI) and cytochrome c oxidase (complex IV, CIV), resulting in different assemblies (supercomplex SCI(1)III(2)IV(1) and megacomplex MCI(2)III(2)IV(2)). Interacts with RAB5IF. Interacts with STMP1. Expressed in the head region and flagellum of epididymal sperm.

The protein localises to the mitochondrion inner membrane. Component of the ubiquinol-cytochrome c oxidoreductase, a multisubunit transmembrane complex that is part of the mitochondrial electron transport chain which drives oxidative phosphorylation. The respiratory chain contains 3 multisubunit complexes succinate dehydrogenase (complex II, CII), ubiquinol-cytochrome c oxidoreductase (cytochrome b-c1 complex, complex III, CIII) and cytochrome c oxidase (complex IV, CIV), that cooperate to transfer electrons derived from NADH and succinate to molecular oxygen, creating an electrochemical gradient over the inner membrane that drives transmembrane transport and the ATP synthase. The cytochrome b-c1 complex catalyzes electron transfer from ubiquinol to cytochrome c, linking this redox reaction to translocation of protons across the mitochondrial inner membrane, with protons being carried across the membrane as hydrogens on the quinol. In the process called Q cycle, 2 protons are consumed from the matrix, 4 protons are released into the intermembrane space and 2 electrons are passed to cytochrome c. The 2 core subunits UQCRC1/QCR1 and UQCRC2/QCR2 are homologous to the 2 mitochondrial-processing peptidase (MPP) subunits beta-MPP and alpha-MPP respectively, and they seem to have preserved their MPP processing properties. May be involved in the in situ processing of UQCRFS1 into the mature Rieske protein and its mitochondrial targeting sequence (MTS)/subunit 9 when incorporated into complex III. The sequence is that of Cytochrome b-c1 complex subunit 2, mitochondrial (Uqcrc2) from Rattus norvegicus (Rat).